Consider the following 628-residue polypeptide: uncharacterized protein (628 aa).

Belongs to the IucA/IucC family.

This is an uncharacterized protein from Sinorhizobium fredii (strain NBRC 101917 / NGR234).